Reading from the N-terminus, the 144-residue chain is Nucleoside diphosphate kinase (144 aa).

6 residues coordinate ATP: Lys-9, Phe-57, Arg-85, Thr-91, Arg-102, and Asn-112. His-115 (pros-phosphohistidine intermediate) is an active-site residue.

It belongs to the NDK family. As to quaternary structure, homotetramer. The cofactor is Mg(2+).

It is found in the cytoplasm. It carries out the reaction a 2'-deoxyribonucleoside 5'-diphosphate + ATP = a 2'-deoxyribonucleoside 5'-triphosphate + ADP. It catalyses the reaction a ribonucleoside 5'-diphosphate + ATP = a ribonucleoside 5'-triphosphate + ADP. In terms of biological role, major role in the synthesis of nucleoside triphosphates other than ATP. The ATP gamma phosphate is transferred to the NDP beta phosphate via a ping-pong mechanism, using a phosphorylated active-site intermediate. The protein is Nucleoside diphosphate kinase of Chlamydia pneumoniae (Chlamydophila pneumoniae).